The primary structure comprises 419 residues: Dual specificity mitogen-activated protein kinase kinase 7 (419 aa).

Ala-2 is modified (N-acetylalanine). A coiled-coil region spans residues Ala-2–Leu-30. The segment covering Lys-18–Leu-30 has biased composition (basic and acidic residues). The segment at Lys-18–Leu-77 is disordered. Over residues Pro-36–Gln-63 the composition is skewed to low complexity. A d Domain region spans residues Gln-37–Ser-57. The Protein kinase domain occupies Leu-120–Ile-380. Residues Met-126–Val-134 and Lys-149 each bind ATP. The active-site Proton acceptor is Asp-243. At Ser-271 the chain carries Phosphoserine; by MAP3K. Thr-275 is modified (phosphothreonine; by MAP3K). Residues His-377–Lys-400 form a DVD domain region. At Ser-411 the chain carries Phosphoserine.

Belongs to the protein kinase superfamily. STE Ser/Thr protein kinase family. MAP kinase kinase subfamily. In terms of assembly, interacts with VRK2. Interacts (via its D domain) with its substrates MAPK8/JNK1, MAPK9/JNK2 and MAPK10/JNK3. Interacts (via its DVD domain) with MAP3Ks activators like MAP3K5/ASK1 and MAP3K1/MEKK1. Interacts with MAPK8IP1/JIP1, MAPK8IP2/JIP2 and MAPK8IP3/JIP3 scaffold proteins. Interacts with RASSF7, the interaction promotes phosphorylation. Found in a complex with SH3RF1, RAC1, MAP3K11/MLK3, MAPK8IP1/JIP1 and MAPK8/JNK1. Found in a complex with SH3RF1, RAC2, MAP3K7/TAK1, MAPK8IP1/JIP1, MAPK8/JNK1 and MAPK9/JNK2. Requires Mg(2+) as cofactor. In terms of processing, activated by phosphorylation on Ser-271 and Thr-275 by MAP kinase kinase kinases (MAP3Ks).

It localises to the nucleus. Its subcellular location is the cytoplasm. The enzyme catalyses L-seryl-[protein] + ATP = O-phospho-L-seryl-[protein] + ADP + H(+). The catalysed reaction is L-threonyl-[protein] + ATP = O-phospho-L-threonyl-[protein] + ADP + H(+). It catalyses the reaction L-tyrosyl-[protein] + ATP = O-phospho-L-tyrosyl-[protein] + ADP + H(+). With respect to regulation, activated by phosphorylation by specific MAP kinase kinase kinases such as MAP3K1/MEKK1, MAP3K3/MEKK3, MAP3K11/MLK3 and MAP3K12/DLK. Functionally, dual specificity protein kinase which acts as an essential component of the MAP kinase signal transduction pathway. Essential component of the stress-activated protein kinase/c-Jun N-terminal kinase (SAP/JNK) signaling pathway. With MAP2K4/MKK4, is the one of the only known kinase to directly activate the stress-activated protein kinase/c-Jun N-terminal kinases MAPK8/JNK1, MAPK9/JNK2 and MAPK10/JNK3. MAP2K4/MKK4 and MAP2K7/MKK7 both activate the JNKs by phosphorylation, but they differ in their preference for the phosphorylation site in the Thr-Pro-Tyr motif. MAP2K4/MKK4 shows preference for phosphorylation of the Tyr residue and MAP2K7/MKK7 for the Thr residue. The monophosphorylation of JNKs on the Thr residue is sufficient to increase JNK activity indicating that MAP2K7/MKK7 is important to trigger JNK activity, while the additional phosphorylation of the Tyr residue by MAP2K4/MKK4 ensures optimal JNK activation. Has a specific role in JNK signal transduction pathway activated by pro-inflammatory cytokines. The MKK/JNK signaling pathway is also involved in mitochondrial death signaling pathway, including the release cytochrome c, leading to apoptosis. Part of a non-canonical MAPK signaling pathway, composed of the upstream MAP3K12 kinase and downstream MAP kinases MAPK1/ERK2 and MAPK3/ERK1, that enhances the AP-1-mediated transcription of APP in response to APOE. In Rattus norvegicus (Rat), this protein is Dual specificity mitogen-activated protein kinase kinase 7.